Here is a 70-residue protein sequence, read N- to C-terminus: Brevinin-1CG3 (70 aa).

The N-terminal stretch at 1-22 (MFTLKKSLLLLFFLGTINLSLC) is a signal peptide. Residues 23 to 44 (EQERNAEEERRDDSDKRDVEVE) constitute a propeptide, removed in mature form. The cysteines at positions 64 and 70 are disulfide-linked.

The protein belongs to the frog skin active peptide (FSAP) family. Brevinin subfamily. Expressed by the skin glands.

It is found in the secreted. Functionally, antimicrobial peptide active against a variety of Gram-positive and some Gram-negative bacterial strains. Has antifungal activity against a slime mold isolate. Has hemolytic activity against human erythrocytes. The protein is Brevinin-1CG3 of Amolops chunganensis (Chungan torrent frog).